The following is a 508-amino-acid chain: MLO-like protein 3 (508 aa).

Over 1 to 21 (MTDKEESNHSSEVGAVRSLQE) the chain is Extracellular. A helical membrane pass occupies residues 22-42 (TPTWALATVCFFFIAVSICLE). Topologically, residues 43 to 68 (RLINLLSTRLKKNRKTSLLEAVEKLK) are cytoplasmic. A helical membrane pass occupies residues 69–89 (SVLMVLGFMSLMLNVTEGEVS). Over 90-153 (KICIPIKYAN…SEEGLTQLSY (64 aa)) the chain is Extracellular. Residues 154-174 (FFFVLACMHILCNLAILLLGM) form a helical membrane-spanning segment. The Cytoplasmic portion of the chain corresponds to 175–275 (AKMRKWNSWE…IQRSLHEDFK (101 aa)). Residues 276 to 296 (TVVGISPLMWLTVVIFMLLDV) form a helical membrane-spanning segment. At 297 to 304 (SGWRVYFY) the chain is on the extracellular side. A helical membrane pass occupies residues 305 to 325 (MSFVPLIIVLVIGTKLEMIVA). Residues 326 to 357 (KMAVTIKENNSVIRGTPLVESNDTHFWFSNPR) are Cytoplasmic-facing. The helical transmembrane segment at 358-378 (FLLSILHYTLFLNTFEMAFIV) threads the bilayer. Residues 379–401 (WITWQFGINSCYHDNQGIIITRL) are Extracellular-facing. A helical transmembrane segment spans residues 402 to 422 (VLAVTVQFLSSYITLPLYAIV). Over 423–508 (TQMGSSYKRA…EIQIQEKTER (86 aa)) the chain is Cytoplasmic. The interval 436–457 (EQLANVLRHWQGMVRDKKKTIQ) is calmodulin-binding. Residues 453–492 (KKTIQTPDTDNNSNNNNGDIDSGESPVQTEVASEFRFSGR) form a disordered region. The residue at position 494 (S494) is a Phosphoserine.

Belongs to the MLO family.

The protein resides in the membrane. Functionally, may be involved in modulation of pathogen defense and leaf cell death. Activity seems to be regulated by Ca(2+)-dependent calmodulin binding and seems not to require heterotrimeric G proteins. In Arabidopsis thaliana (Mouse-ear cress), this protein is MLO-like protein 3 (MLO3).